A 107-amino-acid chain; its full sequence is Glutaredoxin-1 (107 aa).

At Ala-2 the chain carries N-acetylalanine. One can recognise a Glutaredoxin domain in the interval 3-106 (QEFVNCKIQS…ARLKQIGALQ (104 aa)). Lys-9 carries the N6-succinyllysine modification. Disulfide bonds link Cys-23-Cys-26 and Cys-79-Cys-83.

Belongs to the glutaredoxin family.

It localises to the cytoplasm. In terms of biological role, has a glutathione-disulfide oxidoreductase activity in the presence of NADPH and glutathione reductase. Reduces low molecular weight disulfides and proteins. This is Glutaredoxin-1 (Glrx) from Rattus norvegicus (Rat).